A 331-amino-acid chain; its full sequence is Heme A synthase (331 aa).

8 consecutive transmembrane segments (helical) span residues 6–26 (VAIW…IGGF), 87–107 (YVHR…FIYF), 124–144 (ALLF…SGLV), 154–174 (LALH…QFFD), 193–213 (IWII…VAGL), 251–271 (VQFI…ILTI), 279–299 (LYVM…TLLL), and 301–321 (IPMA…GSGL). His255 is a binding site for heme. His309 is a binding site for heme.

It belongs to the COX15/CtaA family. Type 2 subfamily. As to quaternary structure, interacts with CtaB. It depends on heme b as a cofactor.

It localises to the cell membrane. The enzyme catalyses Fe(II)-heme o + 2 A + H2O = Fe(II)-heme a + 2 AH2. It functions in the pathway porphyrin-containing compound metabolism; heme A biosynthesis; heme A from heme O: step 1/1. Catalyzes the conversion of heme O to heme A by two successive hydroxylations of the methyl group at C8. The first hydroxylation forms heme I, the second hydroxylation results in an unstable dihydroxymethyl group, which spontaneously dehydrates, resulting in the formyl group of heme A. The chain is Heme A synthase from Wolbachia pipientis subsp. Culex pipiens (strain wPip).